A 188-amino-acid chain; its full sequence is GMP synthase [glutamine-hydrolyzing] subunit A (188 aa).

A Glutamine amidotransferase type-1 domain is found at 1–188 (MIVILDNGGQ…FCKVCGYKFE (188 aa)). C76 (nucleophile) is an active-site residue. Residues H163 and E165 contribute to the active site.

As to quaternary structure, heterodimer composed of a glutamine amidotransferase subunit (A) and a GMP-binding subunit (B).

It carries out the reaction XMP + L-glutamine + ATP + H2O = GMP + L-glutamate + AMP + diphosphate + 2 H(+). The protein operates within purine metabolism; GMP biosynthesis; GMP from XMP (L-Gln route): step 1/1. Catalyzes the synthesis of GMP from XMP. This Methanocaldococcus jannaschii (strain ATCC 43067 / DSM 2661 / JAL-1 / JCM 10045 / NBRC 100440) (Methanococcus jannaschii) protein is GMP synthase [glutamine-hydrolyzing] subunit A.